Consider the following 955-residue polypeptide: Alpha-1,4 glucan phosphorylase L isozyme, chloroplastic/amyloplastic (955 aa).

A chloroplast-targeting transit peptide spans 1–43 (MSRLSGITPRARDDRSQFQNPRLEIAVPDRTAGLQRTKRTLLV). Residues 522-550 (KVVTESEKDELEEKDTELEKDEDPVPAPI) form a disordered region. Positions 528–545 (EKDELEEKDTELEKDEDP) are enriched in acidic residues. Lysine 801 carries the N6-(pyridoxal phosphate)lysine modification.

This sequence belongs to the glycogen phosphorylase family. It depends on pyridoxal 5'-phosphate as a cofactor.

Its subcellular location is the plastid. It localises to the chloroplast. The protein localises to the amyloplast. It carries out the reaction [(1-&gt;4)-alpha-D-glucosyl](n) + phosphate = [(1-&gt;4)-alpha-D-glucosyl](n-1) + alpha-D-glucose 1-phosphate. Functionally, phosphorylase is an important allosteric enzyme in carbohydrate metabolism. Enzymes from different sources differ in their regulatory mechanisms and in their natural substrates. However, all known phosphorylases share catalytic and structural properties. The sequence is that of Alpha-1,4 glucan phosphorylase L isozyme, chloroplastic/amyloplastic from Ipomoea batatas (Sweet potato).